Consider the following 331-residue polypeptide: Beta-hexosaminidase (331 aa).

Residues D60, R68, R133, and 163–164 (KH) contribute to the substrate site. Catalysis depends on H176, which acts as the Proton donor/acceptor. D247 acts as the Nucleophile in catalysis.

It belongs to the glycosyl hydrolase 3 family. NagZ subfamily.

It is found in the cytoplasm. It carries out the reaction Hydrolysis of terminal non-reducing N-acetyl-D-hexosamine residues in N-acetyl-beta-D-hexosaminides.. It functions in the pathway cell wall biogenesis; peptidoglycan recycling. In terms of biological role, plays a role in peptidoglycan recycling by cleaving the terminal beta-1,4-linked N-acetylglucosamine (GlcNAc) from peptide-linked peptidoglycan fragments, giving rise to free GlcNAc, anhydro-N-acetylmuramic acid and anhydro-N-acetylmuramic acid-linked peptides. This is Beta-hexosaminidase from Xanthomonas campestris pv. campestris (strain B100).